A 171-amino-acid chain; its full sequence is Methylated-DNA--protein-cysteine methyltransferase (171 aa).

The Nucleophile; methyl group acceptor role is filled by cysteine 139.

It belongs to the MGMT family.

The protein localises to the cytoplasm. The enzyme catalyses a 6-O-methyl-2'-deoxyguanosine in DNA + L-cysteinyl-[protein] = S-methyl-L-cysteinyl-[protein] + a 2'-deoxyguanosine in DNA. It catalyses the reaction a 4-O-methyl-thymidine in DNA + L-cysteinyl-[protein] = a thymidine in DNA + S-methyl-L-cysteinyl-[protein]. Involved in the cellular defense against the biological effects of O6-methylguanine (O6-MeG) and O4-methylthymine (O4-MeT) in DNA. Repairs the methylated nucleobase in DNA by stoichiometrically transferring the methyl group to a cysteine residue in the enzyme. This is a suicide reaction: the enzyme is irreversibly inactivated. This chain is Methylated-DNA--protein-cysteine methyltransferase, found in Shigella flexneri.